Reading from the N-terminus, the 436-residue chain is GTPase Der (436 aa).

2 EngA-type G domains span residues 4–167 (PTVA…PTEV) and 175–351 (IRFS…ESQN). Residues 10-17 (GRPNVGKS), 57-61 (DTGGI), 119-122 (NKVD), 181-188 (GRPNVGKS), 229-233 (DTAGM), and 294-297 (NKWD) each bind GTP. The KH-like domain maps to 352 to 436 (RRISSAVLND…PIHLIARKRK (85 aa)).

This sequence belongs to the TRAFAC class TrmE-Era-EngA-EngB-Septin-like GTPase superfamily. EngA (Der) GTPase family. In terms of assembly, associates with the 50S ribosomal subunit.

Its function is as follows. GTPase that plays an essential role in the late steps of ribosome biogenesis. The chain is GTPase Der from Streptococcus thermophilus (strain CNRZ 1066).